A 544-amino-acid polypeptide reads, in one-letter code: BTB/POZ domain-containing protein At2g13690 (544 aa).

Disordered regions lie at residues 34-66 (ASPDTRSISSRNHIPAKSQQQRPKLVPCSPQSS) and 82-111 (LSPGRVSPIDSDPTVTTMQETETTQEEEDD). The segment covering 37-55 (DTRSISSRNHIPAKSQQQR) has biased composition (polar residues). Residues 93–103 (DPTVTTMQETE) show a composition bias toward low complexity. One can recognise a BTB domain in the interval 142–225 (YDARLSLKGR…MFEESNVIIK (84 aa)).

It participates in protein modification; protein ubiquitination. May act as a substrate-specific adapter of an E3 ubiquitin-protein ligase complex (CUL3-RBX1-BTB) which mediates the ubiquitination and subsequent proteasomal degradation of target proteins. The sequence is that of BTB/POZ domain-containing protein At2g13690 (PRL1-IFG) from Arabidopsis thaliana (Mouse-ear cress).